The following is a 564-amino-acid chain: Dihydroxy-acid dehydratase (564 aa).

Cys-51 contacts [2Fe-2S] cluster. Asp-83 lines the Mg(2+) pocket. Cys-124 serves as a coordination point for [2Fe-2S] cluster. Mg(2+)-binding residues include Asp-125 and Lys-126. Residue Lys-126 is modified to N6-carboxylysine. Cys-196 serves as a coordination point for [2Fe-2S] cluster. A Mg(2+)-binding site is contributed by Glu-448. Catalysis depends on Ser-474, which acts as the Proton acceptor.

Belongs to the IlvD/Edd family. Homodimer. [2Fe-2S] cluster serves as cofactor. It depends on Mg(2+) as a cofactor.

The enzyme catalyses (2R)-2,3-dihydroxy-3-methylbutanoate = 3-methyl-2-oxobutanoate + H2O. It catalyses the reaction (2R,3R)-2,3-dihydroxy-3-methylpentanoate = (S)-3-methyl-2-oxopentanoate + H2O. Its pathway is amino-acid biosynthesis; L-isoleucine biosynthesis; L-isoleucine from 2-oxobutanoate: step 3/4. It participates in amino-acid biosynthesis; L-valine biosynthesis; L-valine from pyruvate: step 3/4. Functionally, functions in the biosynthesis of branched-chain amino acids. Catalyzes the dehydration of (2R,3R)-2,3-dihydroxy-3-methylpentanoate (2,3-dihydroxy-3-methylvalerate) into 2-oxo-3-methylpentanoate (2-oxo-3-methylvalerate) and of (2R)-2,3-dihydroxy-3-methylbutanoate (2,3-dihydroxyisovalerate) into 2-oxo-3-methylbutanoate (2-oxoisovalerate), the penultimate precursor to L-isoleucine and L-valine, respectively. The polypeptide is Dihydroxy-acid dehydratase (Pyrobaculum calidifontis (strain DSM 21063 / JCM 11548 / VA1)).